Reading from the N-terminus, the 451-residue chain is MKNKPLAFQIWVVISGILLAISILLLVLFSNTLRDFFTNETYTTIENEQHVLTEYRLPGSIERRYYSEEATAPTTVRSVQHVLLPENEEASSDKDLSILSSSFIHKVYKLADKQEAKKKRYSADVNGEKVFFVIKKGLSVNGQSAMMLSYALDSYRDDLAYTLFKQLLFIIAVVILLSWIPAIWLAKYLSRPLVSFEKHVKRISEQDWDDPVKVDRKDEIGKLGHTIEEMRQKLVQKDETERTLLQNISHDLKTPVMVIRGYTQSIKDGIFPKGDLENTVDVIECEALKLEKKIKDLLYLTKLDYLAKQKVQHDMFSIVEVTEEVIERLKWARKELSWEIDVEEDILMPGDPEQWNKLLENILENQIRYAETKIEISMKQDDRNIVITIKNDGPHIEDEMLSSLYEPFNKGKKGEFGIGLSIVKRILTLHKASISIENDKTGVTYRIAVPK.

Topologically, residues 1–9 are cytoplasmic; that stretch reads MKNKPLAFQ. A helical membrane pass occupies residues 10–30; sequence IWVVISGILLAISILLLVLFS. The Extracellular portion of the chain corresponds to 31-165; that stretch reads NTLRDFFTNE…RDDLAYTLFK (135 aa). The chain crosses the membrane as a helical span at residues 166-186; the sequence is QLLFIIAVVILLSWIPAIWLA. An HAMP domain is found at 187–239; it reads KYLSRPLVSFEKHVKRISEQDWDDPVKVDRKDEIGKLGHTIEEMRQKLVQKDE. Residues 187–451 lie on the Cytoplasmic side of the membrane; the sequence is KYLSRPLVSF…GVTYRIAVPK (265 aa). Residues 247-451 form the Histidine kinase domain; it reads NISHDLKTPV…GVTYRIAVPK (205 aa). Residue His-250 is modified to Phosphohistidine; by autocatalysis.

It localises to the cell membrane. It carries out the reaction ATP + protein L-histidine = ADP + protein N-phospho-L-histidine.. Functionally, member of the two-component regulatory system CssS/CssR required to control the cellular response to secretion stress. Required for the transcription of htrA. Could detect misfolded proteins at the membrane-cell wall interface and then activate CssR by phosphorylation. The chain is Sensor histidine kinase CssS (cssS) from Bacillus subtilis (strain 168).